Consider the following 525-residue polypeptide: NAD(P)H-quinone oxidoreductase subunit 2 (525 aa).

14 helical membrane-spanning segments follow: residues 14–34 (AIWP…VDLV), 42–62 (SLPA…VLQW), 78–98 (PVSI…VMMA), 117–137 (LTAT…MVFV), 167–187 (LLTG…LYGL), 201–221 (LANA…GIGF), 240–260 (PTPV…ALAI), 276–296 (AVLS…AIAQ), 302–322 (LLAY…VAGT), 330–350 (IFYL…VTLF), 374–394 (LCLS…GFFG), 396–416 (LYLF…VGLV), 462–482 (VGMV…NPLF), and 494–514 (FLGF…SLAV).

It belongs to the complex I subunit 2 family. As to quaternary structure, NDH-1 can be composed of about 15 different subunits; different subcomplexes with different compositions have been identified which probably have different functions.

The protein resides in the cellular thylakoid membrane. The catalysed reaction is a plastoquinone + NADH + (n+1) H(+)(in) = a plastoquinol + NAD(+) + n H(+)(out). It catalyses the reaction a plastoquinone + NADPH + (n+1) H(+)(in) = a plastoquinol + NADP(+) + n H(+)(out). In terms of biological role, NDH-1 shuttles electrons from an unknown electron donor, via FMN and iron-sulfur (Fe-S) centers, to quinones in the respiratory and/or the photosynthetic chain. The immediate electron acceptor for the enzyme in this species is believed to be plastoquinone. Couples the redox reaction to proton translocation, and thus conserves the redox energy in a proton gradient. Cyanobacterial NDH-1 also plays a role in inorganic carbon-concentration. This Synechococcus sp. (strain JA-3-3Ab) (Cyanobacteria bacterium Yellowstone A-Prime) protein is NAD(P)H-quinone oxidoreductase subunit 2.